The following is a 53-amino-acid chain: MVIATDDLEVACPKCERAGEIEGTPCPACSGKGVILTAQGYTLLDFIQKHLNK.

2 CXXCXGXG motif repeats span residues 12 to 19 (CPKCERAG) and 26 to 33 (CPACSGKG).

As to quaternary structure, homopentamer or homohexamer.

The protein localises to the cytoplasm. Functionally, by forming a complex with tryptophan-activated TRAP, and masking its RNA binding site, it inhibits TRAP's RNA binding ability, thereby abolishing TRAP regulation of gene expression, leading to antitermination and increased trp operon expression. AT acts by competing with messenger RNA for the RNA binding domain of TRAP. The protein is Tryptophan RNA-binding attenuator protein inhibitory protein (rtpA) of Bacillus subtilis (strain 168).